The following is a 232-amino-acid chain: tRNA (guanine-N(1)-)-methyltransferase (232 aa).

Residues Gly-111 and 131–136 each bind S-adenosyl-L-methionine; that span reads IGDYIL.

This sequence belongs to the RNA methyltransferase TrmD family. As to quaternary structure, homodimer.

It localises to the cytoplasm. The catalysed reaction is guanosine(37) in tRNA + S-adenosyl-L-methionine = N(1)-methylguanosine(37) in tRNA + S-adenosyl-L-homocysteine + H(+). In terms of biological role, specifically methylates guanosine-37 in various tRNAs. In Bartonella bacilliformis (strain ATCC 35685 / KC583 / Herrer 020/F12,63), this protein is tRNA (guanine-N(1)-)-methyltransferase.